The chain runs to 94 residues: DNA-directed RNA polymerase subunit Rpo11 (94 aa).

It belongs to the archaeal Rpo11/eukaryotic RPB11/RPC19 RNA polymerase subunit family. As to quaternary structure, part of the RNA polymerase complex.

The protein resides in the cytoplasm. The enzyme catalyses RNA(n) + a ribonucleoside 5'-triphosphate = RNA(n+1) + diphosphate. Its function is as follows. DNA-dependent RNA polymerase (RNAP) catalyzes the transcription of DNA into RNA using the four ribonucleoside triphosphates as substrates. The sequence is that of DNA-directed RNA polymerase subunit Rpo11 from Halobacterium salinarum (strain ATCC 700922 / JCM 11081 / NRC-1) (Halobacterium halobium).